Here is a 267-residue protein sequence, read N- to C-terminus: Dichloromethane dehalogenase (267 aa).

Residues 3–85 (TKLRYLHHPA…YLSEKYDCSS (83 aa)) enclose the GST N-terminal domain. A GST C-terminal domain is found at 91 to 224 (TLEERGHIQQ…AWQYENVRKY (134 aa)).

The protein belongs to the GST superfamily. In terms of assembly, homohexamer.

The protein resides in the cytoplasm. The catalysed reaction is dichloromethane + H2O = formaldehyde + 2 chloride + 2 H(+). It participates in xenobiotic degradation; dichloromethane degradation. The chain is Dichloromethane dehalogenase (dcmA) from Methylophilus leisingeri (strain DSM 6813 / VKM B-2013 / DM11).